The following is a 1217-amino-acid chain: Splicing factor 3B subunit 3 (1217 aa).

2 interaction with PHF5A, SF3B1 and SF3B5 regions span residues 105 to 119 (ETFGKSGCRRIVPGQ) and 145 to 168 (NRDAAARLTISSPLEAHKANTLVY). A Phosphoserine modification is found at Ser156. 2 interaction with SF3B1 and SF3B5 regions span residues 193-231 (DNDPTGEAAANTQQTLTFYELDLGLNHVVRKYSEPLEEH) and 786-804 (RKFVIHPESNNLIIIETDH). Residues 1028–1049 (TYPRWVTTASLLDYDTVAGADK) are interaction with SF3B1. Positions 1100-1123 (TVLSLQKTTLIPGGSESLVYTTLS) are interaction with SF3B5. Position 1200 is a phosphothreonine (Thr1200).

This sequence belongs to the RSE1 family. As to quaternary structure, component of the 17S U2 SnRNP complex, a ribonucleoprotein complex that contains small nuclear RNA (snRNA) U2 and a number of specific proteins. Part of the SF3B subcomplex of the 17S U2 SnRNP complex. SF3B associates with the splicing subcomplex SF3A and a 12S RNA unit to form the U2 small nuclear ribonucleoproteins complex (U2 snRNP). Within the SF3B subcomplex, interacts directly with SF3B1 (via HEAT domain), SF3B5 and PHF5A. Identified in the spliceosome A complex; remains associated with the spliceosome throughout the splicing process. Component of the spliceosome B complex. Identified in the spliceosome C complex. Identified in the spliceosome E complex. Component of the minor (U12-type spliceosome) spliceosome. Within this complex, interacts with SCNM1. Associates with the STAGA transcription coactivator-HAT complex. Interacts with SUPT3H. Interacts with TAF3.

It localises to the nucleus. Component of the 17S U2 SnRNP complex of the spliceosome, a large ribonucleoprotein complex that removes introns from transcribed pre-mRNAs. The 17S U2 SnRNP complex (1) directly participates in early spliceosome assembly and (2) mediates recognition of the intron branch site during pre-mRNA splicing by promoting the selection of the pre-mRNA branch-site adenosine, the nucleophile for the first step of splicing. Within the 17S U2 SnRNP complex, SF3B3 is part of the SF3B subcomplex, which is required for 'A' complex assembly formed by the stable binding of U2 snRNP to the branchpoint sequence in pre-mRNA. Sequence independent binding of SF3A and SF3B subcomplexes upstream of the branch site is essential, it may anchor U2 snRNP to the pre-mRNA. May also be involved in the assembly of the 'E' complex. Also acts as a component of the minor spliceosome, which is involved in the splicing of U12-type introns in pre-mRNAs. In Bos taurus (Bovine), this protein is Splicing factor 3B subunit 3 (SF3B3).